Here is a 75-residue protein sequence, read N- to C-terminus: Lividin-3 (75 aa).

The N-terminal stretch at methionine 1–cysteine 22 is a signal peptide. Positions glutamate 23 to valine 40 are excised as a propeptide. A disulfide bridge links cysteine 69 with cysteine 75.

Expressed by the skin glands.

Its subcellular location is the secreted. Antimicrobial peptide. The polypeptide is Lividin-3 (Odorrana livida (Green mountain frog)).